The following is a 576-amino-acid chain: MEFRKEEFKKLAGNTLGHLHRILEKKQKNGETIELTEEGQPVVKEEKHQPVVDCTCFGLPRRYIIAIMSGLGFCISFGIRCNLGVAIVSMVNNNTVYKGNKLVIEQAQFNWDPETVGMIHGSFFWGYIVTQIPGGYICQKFAANRVFGFAIVATSTLNMLIPSAARVHFACVICVRILQGLVEGVTYPACHGIWSKWAPPLERSRLATTAFCGSYAGAVVAMPLAGVLVQYSGWSSVFYVYGSFGITWYMFWILVSYESPAQHPTISEEERKYIEESIGESTGFMNPMAKFKAPWRKFFTSMPVYAIIVANFCRSWTFYLLLISQPAYFEEVFGFAISKVGLLSALPHLVMTIIVPIGGQIADFLRTKRIMSTTNVRKMMNCGGFGMEATLLLVVGYSHSRGVAISFLVLAVGFSGFAISGFNVNHLDIAPRYASILMGISNGVGTLSGMVCPLIVGAMTKHKTREEWQYVFLIASLVHYGGVVFYGIFASGEKQPWAEPEETSDEKCGFIHEDELADESEEQTQAHGGYGSYGATQTTSQQNGGWATDWEKKDEFIQDQGKDPYLYGTVAERDLS.

The Cytoplasmic portion of the chain corresponds to 1-63; that stretch reads MEFRKEEFKK…CTCFGLPRRY (63 aa). A helical transmembrane segment spans residues 64 to 84; the sequence is IIAIMSGLGFCISFGIRCNLG. Over 85-116 the chain is Vesicular; the sequence is VAIVSMVNNNTVYKGNKLVIEQAQFNWDPETV. Residue Asn93 is glycosylated (N-linked (GlcNAc...) asparagine). Residues 117–137 traverse the membrane as a helical segment; sequence GMIHGSFFWGYIVTQIPGGYI. Topologically, residues 138–140 are cytoplasmic; it reads CQK. Residues 141–161 form a helical membrane-spanning segment; it reads FAANRVFGFAIVATSTLNMLI. At 162 to 168 the chain is on the vesicular side; it reads PSAARVH. The chain crosses the membrane as a helical span at residues 169–189; the sequence is FACVICVRILQGLVEGVTYPA. The Cytoplasmic segment spans residues 190–208; the sequence is CHGIWSKWAPPLERSRLAT. A helical transmembrane segment spans residues 209–229; it reads TAFCGSYAGAVVAMPLAGVLV. The Vesicular segment spans residues 230–236; it reads QYSGWSS. The chain crosses the membrane as a helical span at residues 237–257; the sequence is VFYVYGSFGITWYMFWILVSY. Residues 258-297 lie on the Cytoplasmic side of the membrane; sequence ESPAQHPTISEEERKYIEESIGESTGFMNPMAKFKAPWRK. Residues 298 to 320 traverse the membrane as a helical segment; sequence FFTSMPVYAIIVANFCRSWTFYL. Residues 321–341 lie on the Vesicular side of the membrane; sequence LLISQPAYFEEVFGFAISKVG. Residues 342–362 traverse the membrane as a helical segment; the sequence is LLSALPHLVMTIIVPIGGQIA. Over 363–378 the chain is Cytoplasmic; the sequence is DFLRTKRIMSTTNVRK. The helical transmembrane segment at 379 to 399 threads the bilayer; that stretch reads MMNCGGFGMEATLLLVVGYSH. Topologically, residues 400-401 are vesicular; that stretch reads SR. A helical membrane pass occupies residues 402 to 422; that stretch reads GVAISFLVLAVGFSGFAISGF. Over 423–435 the chain is Cytoplasmic; sequence NVNHLDIAPRYAS. The chain crosses the membrane as a helical span at residues 436-456; sequence ILMGISNGVGTLSGMVCPLIV. The Vesicular segment spans residues 457–469; the sequence is GAMTKHKTREEWQ. Residues 470-490 form a helical membrane-spanning segment; that stretch reads YVFLIASLVHYGGVVFYGIFA. Topologically, residues 491–576 are cytoplasmic; the sequence is SGEKQPWAEP…YGTVAERDLS (86 aa). The segment at 517–552 is disordered; sequence ADESEEQTQAHGGYGSYGATQTTSQQNGGWATDWEK. Residues 534-545 are compositionally biased toward polar residues; the sequence is GATQTTSQQNGG.

The protein belongs to the major facilitator superfamily. Sodium/anion cotransporter family. VGLUT subfamily.

The protein resides in the cytoplasmic vesicle. It is found in the secretory vesicle. Its subcellular location is the synaptic vesicle membrane. It localises to the cell membrane. The protein localises to the synapse. The protein resides in the synaptosome. It carries out the reaction L-glutamate(out) = L-glutamate(in). It catalyses the reaction chloride(in) = chloride(out). The enzyme catalyses 3 Na(+)(out) + phosphate(out) = 3 Na(+)(in) + phosphate(in). The catalysed reaction is phosphate(in) = phosphate(out). It carries out the reaction K(+)(in) + H(+)(out) = K(+)(out) + H(+)(in). Chloride channel activity is allosterically activated by lumenal H(+) and Cl(-) leading to synaptic vesicles acidification. The L-glutamate transport activity is allosterically activated by lumenal H(+) and Cl(-). The allosteric activation by H(+) efficiently prevents non-vesicular efflux across the plasma membrane, thereby restricting L-glutamate transport activity to acidic membranes such as synaptic vesicles. Its function is as follows. Multifunctional transporter that transports L-glutamate as well as multiple ions such as chloride, proton, potassium, sodium and phosphate. At the synaptic vesicle membrane, mainly functions as an uniporter which transports preferentially L-glutamate but also phosphate from the cytoplasm into synaptic vesicles at presynaptic nerve terminals of excitatory neural cells. The L-glutamate or phosphate uniporter activity is electrogenic and is driven by the proton electrochemical gradient, mainly by the electrical gradient established by the vacuolar H(+)-ATPase across the synaptic vesicle membrane. In addition, functions as a chloride channel that allows a chloride permeation through the synaptic vesicle membrane that affects the proton electrochemical gradient and promotes synaptic vesicles acidification. Moreover, may function as a K(+)/H(+) antiport allowing to maintain the electrical gradient and to decrease chemical gradient and therefore sustain vesicular glutamate uptake. The vesicular K(+)/H(+) antiport activity is electroneutral. At the plasma membrane, following exocytosis, functions as a symporter of Na(+) and phosphate from the extracellular space to the cytoplasm allowing synaptic phosphate homeostasis regulation. The symporter activity is driven by an inside negative membrane potential and is electrogenic. Is necessary for synaptic signaling of visual-evoked responses from photoreceptors. The polypeptide is Vesicular glutamate transporter 1 (Xenopus laevis (African clawed frog)).